A 949-amino-acid polypeptide reads, in one-letter code: Translation initiation factor IF-2 (949 aa).

Disordered stretches follow at residues Ile61–Lys122, Val139–Gln159, and Leu171–His284. Basic and acidic residues-rich tracts occupy residues Lys112–Lys122 and Gln150–Gln159. Low complexity predominate over residues Ser174 to Asn190. The span at Ala191–His208 shows a compositional bias: basic and acidic residues. Positions Glu209–Ile220 are enriched in basic residues. The span at Glu249–Lys264 shows a compositional bias: basic and acidic residues. One can recognise a tr-type G domain in the interval Glu448–Lys617. Positions Gly457 to Thr464 are G1. Gly457–Thr464 contacts GTP. The tract at residues Gly482 to His486 is G2. The segment at Asp503–Gly506 is G3. Residues Asp503–His507 and Asn557–Asp560 contribute to the GTP site. The segment at Asn557–Asp560 is G4. The segment at Ser593–Lys595 is G5.

It belongs to the TRAFAC class translation factor GTPase superfamily. Classic translation factor GTPase family. IF-2 subfamily.

The protein resides in the cytoplasm. In terms of biological role, one of the essential components for the initiation of protein synthesis. Protects formylmethionyl-tRNA from spontaneous hydrolysis and promotes its binding to the 30S ribosomal subunits. Also involved in the hydrolysis of GTP during the formation of the 70S ribosomal complex. This Helicobacter pylori (strain J99 / ATCC 700824) (Campylobacter pylori J99) protein is Translation initiation factor IF-2 (infB).